A 153-amino-acid polypeptide reads, in one-letter code: FAD synthase (153 aa).

Residues 9–10 (TF), 14–17 (HPGH), and D92 contribute to the ATP site.

The protein belongs to the archaeal FAD synthase family. Homodimer. A divalent metal cation is required as a cofactor.

It carries out the reaction FMN + ATP + H(+) = FAD + diphosphate. It functions in the pathway cofactor biosynthesis; FAD biosynthesis; FAD from FMN: step 1/1. Its function is as follows. Catalyzes the transfer of the AMP portion of ATP to flavin mononucleotide (FMN) to produce flavin adenine dinucleotide (FAD) coenzyme. This chain is FAD synthase, found in Halorubrum lacusprofundi (strain ATCC 49239 / DSM 5036 / JCM 8891 / ACAM 34).